The following is a 375-amino-acid chain: MSCPVIELAQQLIRRPSLSPDDAGCQALMIERLRAIGFTVEPMDFGDTQNFWAWRGHGETLAFAGHTDVVPAGDADRWINPPFEPTIRDGMLFGRGAADMKGSLAAMVVAAERFVAQYPNHRGRLAFLITSDEEASAKNGTVKVVETLMARNERLDYCLVGEPSSTEVVGDVVKNGRRGSLTCNLTIHGVQGHVAYPHLADNPVHRAAPMLAELVNIEWDKGNEFFPPTSMQIANVQSGTGSNNVIPGDMFVQFNFRFSTELTDEMIKSRVIALLEKYQLRYRLEWWLSGQPFLTGRGKLVDAVVNAIEHYNEIKPQLLTNGGTSDGRFIARMGAQVVELGPVNATIHKINECVNAADLQLLARMYQRVMEQLVA.

His-66 contacts Zn(2+). The active site involves Asp-68. A Zn(2+)-binding site is contributed by Asp-99. Catalysis depends on Glu-133, which acts as the Proton acceptor. The Zn(2+) site is built by Glu-134, Glu-162, and His-348.

Belongs to the peptidase M20A family. DapE subfamily. As to quaternary structure, homodimer. The cofactor is Zn(2+). It depends on Co(2+) as a cofactor.

The enzyme catalyses N-succinyl-(2S,6S)-2,6-diaminopimelate + H2O = (2S,6S)-2,6-diaminopimelate + succinate. It functions in the pathway amino-acid biosynthesis; L-lysine biosynthesis via DAP pathway; LL-2,6-diaminopimelate from (S)-tetrahydrodipicolinate (succinylase route): step 3/3. In terms of biological role, catalyzes the hydrolysis of N-succinyl-L,L-diaminopimelic acid (SDAP), forming succinate and LL-2,6-diaminopimelate (DAP), an intermediate involved in the bacterial biosynthesis of lysine and meso-diaminopimelic acid, an essential component of bacterial cell walls. The chain is Succinyl-diaminopimelate desuccinylase from Klebsiella pneumoniae subsp. pneumoniae (strain ATCC 700721 / MGH 78578).